A 349-amino-acid chain; its full sequence is Trans-enoyl reductase phmE (349 aa).

55–58 lines the NADP(+) pocket; it reads CDWK. 143-150 serves as a coordination point for substrate; the sequence is TGIGTMGL. NADP(+)-binding positions include 182–185, Y200, and 247–248; these read SPKN and LE. 267–271 is a binding site for substrate; that stretch reads GMAIL. 336 to 337 serves as a coordination point for NADP(+); it reads VS.

The protein belongs to the zinc-containing alcohol dehydrogenase family. In terms of assembly, monomer.

The protein operates within mycotoxin biosynthesis. In terms of biological role, trans-enoyl reductase; part of the gene cluster that mediates the biosynthesis of the mycotoxins phomacins, leucine-derived cytochalasans with potent actin polymerization-inhibitory activities and monocot-specific antigerminative activities. The first step in the pathway is catalyzed by the hybrid PKS-NRPS phmA, assisted by the enoyl reductase phmE, that are responsible for fusion of the leucine precursor and the polyketide backbone to produce a 2-pyrrolidone intermediate. The polyketide synthase module (PKS) of phmA is responsible for the synthesis of the polyketide backbone and the downstream nonribosomal peptide synthetase (NRPS) amidates the carboxyl end of the polyketide with the leucine precursor. Because phmA lacks a designated enoylreductase (ER) domain, the required activity is provided the enoyl reductase phmE. Reduction by the hydrolyase phmG, followed by dehydration and intra-molecular Diels-Alder cyclization by the Diels-Alderase phmD then yield the required isoindolone-fused macrocycle. A number of oxidative steps catalyzed by the tailoring cytochrome P450 monooxygenase phmB, the FAD-linked oxidoreductase phmC and the short-chain dehydrogenase/reductase phmF, are further required to afford the final products, phomacin D and phomacin E. In Phaeosphaeria nodorum (strain SN15 / ATCC MYA-4574 / FGSC 10173) (Glume blotch fungus), this protein is Trans-enoyl reductase phmE.